The following is a 269-amino-acid chain: GATA transcription factor 3 (269 aa).

Residues 136–143 (KPRTKRSR) carry the Nuclear localization signal motif. The GATA-type zinc finger occupies 176 to 230 (LVFQRRCSHCGTNNTPQWRTGPVGPKTLCNACGVRFKSGRLCPEYRPADSPTFSN). Positions 245-269 (KSKELGEETGEASTKSDPVKFGSKW) are disordered.

It belongs to the type IV zinc-finger family. Class A subfamily. In terms of tissue distribution, mostly expressed in roots. Also expressed in stems, flowers and leaves.

It localises to the nucleus. In terms of biological role, transcriptional activator that specifically binds 5'-GATA-3' or 5'-GAT-3' motifs within gene promoters. May be involved in the regulation of some light-responsive genes. This Arabidopsis thaliana (Mouse-ear cress) protein is GATA transcription factor 3 (GATA3).